The sequence spans 118 residues: NAD(P)H-quinone oxidoreductase subunit M (118 aa).

It belongs to the complex I NdhM subunit family. As to quaternary structure, NDH-1 can be composed of about 15 different subunits; different subcomplexes with different compositions have been identified which probably have different functions.

Its subcellular location is the cellular thylakoid membrane. It carries out the reaction a plastoquinone + NADH + (n+1) H(+)(in) = a plastoquinol + NAD(+) + n H(+)(out). The catalysed reaction is a plastoquinone + NADPH + (n+1) H(+)(in) = a plastoquinol + NADP(+) + n H(+)(out). NDH-1 shuttles electrons from an unknown electron donor, via FMN and iron-sulfur (Fe-S) centers, to quinones in the respiratory and/or the photosynthetic chain. The immediate electron acceptor for the enzyme in this species is believed to be plastoquinone. Couples the redox reaction to proton translocation, and thus conserves the redox energy in a proton gradient. Cyanobacterial NDH-1 also plays a role in inorganic carbon-concentration. In Trichormus variabilis (strain ATCC 29413 / PCC 7937) (Anabaena variabilis), this protein is NAD(P)H-quinone oxidoreductase subunit M.